Reading from the N-terminus, the 90-residue chain is Putative beta-neurotoxin RjAa2f (90 aa).

The first 18 residues, 1 to 18 (MKILIFIIASFMLIGVEC), serve as a signal peptide directing secretion. Residues 19 to 89 (KEGYPMGSDG…VWDSKTNKCG (71 aa)) form the LCN-type CS-alpha/beta domain. Cystine bridges form between Cys29–Cys88, Cys33–Cys62, Cys40–Cys69, and Cys44–Cys71.

This sequence belongs to the long (4 C-C) scorpion toxin superfamily. Sodium channel inhibitor family. Beta subfamily. Expressed by the venom gland.

It is found in the secreted. Its function is as follows. Beta toxins bind voltage-independently at site-4 of sodium channels (Nav) and shift the voltage of activation toward more negative potentials thereby affecting sodium channel activation and promoting spontaneous and repetitive firing. The polypeptide is Putative beta-neurotoxin RjAa2f (Rhopalurus junceus (Caribbean blue scorpion)).